The following is a 387-amino-acid chain: Succinate--CoA ligase [ADP-forming] subunit beta (387 aa).

ATP contacts are provided by residues lysine 46, 53 to 55 (GRG), glutamate 99, alanine 102, and glutamate 107. Mg(2+) contacts are provided by asparagine 199 and aspartate 213. Residues asparagine 264 and 321–323 (GIV) each bind substrate.

It belongs to the succinate/malate CoA ligase beta subunit family. In terms of assembly, heterotetramer of two alpha and two beta subunits. Mg(2+) serves as cofactor.

It carries out the reaction succinate + ATP + CoA = succinyl-CoA + ADP + phosphate. The enzyme catalyses GTP + succinate + CoA = succinyl-CoA + GDP + phosphate. The protein operates within carbohydrate metabolism; tricarboxylic acid cycle; succinate from succinyl-CoA (ligase route): step 1/1. Its function is as follows. Succinyl-CoA synthetase functions in the citric acid cycle (TCA), coupling the hydrolysis of succinyl-CoA to the synthesis of either ATP or GTP and thus represents the only step of substrate-level phosphorylation in the TCA. The beta subunit provides nucleotide specificity of the enzyme and binds the substrate succinate, while the binding sites for coenzyme A and phosphate are found in the alpha subunit. The polypeptide is Succinate--CoA ligase [ADP-forming] subunit beta (Campylobacter jejuni (strain RM1221)).